The primary structure comprises 69 residues: NAD(P)H-quinone oxidoreductase subunit L (69 aa).

2 helical membrane-spanning segments follow: residues 5 to 25 (LILLLGLLGGYLLVMPAITYF) and 40 to 60 (GFMYFLVFFFFPSLLLLSPFL).

Belongs to the complex I NdhL subunit family. As to quaternary structure, NDH-1 can be composed of about 15 different subunits; different subcomplexes with different compositions have been identified which probably have different functions.

The protein localises to the cellular thylakoid membrane. The enzyme catalyses a plastoquinone + NADH + (n+1) H(+)(in) = a plastoquinol + NAD(+) + n H(+)(out). The catalysed reaction is a plastoquinone + NADPH + (n+1) H(+)(in) = a plastoquinol + NADP(+) + n H(+)(out). In terms of biological role, NDH-1 shuttles electrons from an unknown electron donor, via FMN and iron-sulfur (Fe-S) centers, to quinones in the respiratory and/or the photosynthetic chain. The immediate electron acceptor for the enzyme in this species is believed to be plastoquinone. Couples the redox reaction to proton translocation, and thus conserves the redox energy in a proton gradient. Cyanobacterial NDH-1 also plays a role in inorganic carbon-concentration. The chain is NAD(P)H-quinone oxidoreductase subunit L from Acaryochloris marina (strain MBIC 11017).